Reading from the N-terminus, the 50-residue chain is MPRDIITLGCTECKQRNYTTTKNKKNTPQKLEFNKYCRFCQKHTLHKETK.

The protein belongs to the bacterial ribosomal protein bL33 family.

In Citrifermentans bemidjiense (strain ATCC BAA-1014 / DSM 16622 / JCM 12645 / Bem) (Geobacter bemidjiensis), this protein is Large ribosomal subunit protein bL33.